We begin with the raw amino-acid sequence, 463 residues long: NADH dehydrogenase [ubiquinone] iron-sulfur protein 2, mitochondrial (463 aa).

The transit peptide at 1–33 (MAALRALCGFRGVAAQVLRPGAGVRLPIQPSRG) directs the protein to the mitochondrion. Residue lysine 62 is modified to N6-acetyllysine. Arginine 118 bears the Symmetric dimethylarginine mark. Residues cysteine 326, cysteine 332, and cysteine 347 each coordinate [4Fe-4S] cluster.

It belongs to the complex I 49 kDa subunit family. As to quaternary structure, core subunit of respiratory chain NADH dehydrogenase (Complex I) which is composed of 45 different subunits. Component of the iron-sulfur (IP) fragment of the enzyme. Interacts with NDUFAF3. Interacts with NDUFAF7. Interacts with CERS2. [4Fe-4S] cluster serves as cofactor. Dimethylation at Arg-118 by NDUFAF7 takes place after NDUFS2 assembles into the complex I, leading to stabilize the early intermediate complex.

It localises to the mitochondrion inner membrane. The catalysed reaction is a ubiquinone + NADH + 5 H(+)(in) = a ubiquinol + NAD(+) + 4 H(+)(out). Core subunit of the mitochondrial membrane respiratory chain NADH dehydrogenase (Complex I) which catalyzes electron transfer from NADH through the respiratory chain, using ubiquinone as an electron acceptor. Essential for the catalytic activity and assembly of complex I. Redox-sensitive, critical component of the oxygen-sensing pathway in the pulmonary vasculature which plays a key role in acute pulmonary oxygen-sensing and hypoxic pulmonary vasoconstriction. Plays an important role in carotid body sensing of hypoxia. Essential for glia-like neural stem and progenitor cell proliferation, differentiation and subsequent oligodendrocyte or neuronal maturation. The polypeptide is NADH dehydrogenase [ubiquinone] iron-sulfur protein 2, mitochondrial (NDUFS2) (Pan troglodytes (Chimpanzee)).